A 554-amino-acid chain; its full sequence is 3-(3-hydroxy-phenyl)propionate/3-hydroxycinnamic acid hydroxylase (554 aa).

Residues 17–46 (QVAIAGAGPVGLMMANYLGQMGIDVLVVEK) and 285–295 (FRIDRVLLAGD) each bind FAD.

The protein belongs to the PheA/TfdB FAD monooxygenase family. The cofactor is FAD.

It carries out the reaction 3-(3-hydroxyphenyl)propanoate + NADH + O2 + H(+) = 3-(2,3-dihydroxyphenyl)propanoate + NAD(+) + H2O. The enzyme catalyses (2E)-3-(3-hydroxyphenyl)prop-2-enoate + NADH + O2 + H(+) = (2E)-3-(2,3-dihydroxyphenyl)prop-2-enoate + NAD(+) + H2O. It participates in aromatic compound metabolism; 3-phenylpropanoate degradation. Catalyzes the insertion of one atom of molecular oxygen into position 2 of the phenyl ring of 3-(3-hydroxyphenyl)propionate (3-HPP) and hydroxycinnamic acid (3HCI). This is 3-(3-hydroxy-phenyl)propionate/3-hydroxycinnamic acid hydroxylase from Escherichia coli O17:K52:H18 (strain UMN026 / ExPEC).